A 247-amino-acid chain; its full sequence is MWILKSGFNRCRNFSFMNRGLLGLRNLSVTHNNLVSYLEHLSVQKPSTSNTVAQGTLFEYLVQYVLKQHSFQLERCGGKGDGGVDLVGQFSIKNVLFEPTKVVVSCKSNKGSIGPRFVRELEGSLSSYPTDTLGILACLGSFTSSSLKTLSISNRPLALCRIYVDGFHSYMFQFVWNHQALAIFPDLSVRQIYKLPSPTANIVPLSQEFSQVNYVSLFELLQPLSRTEERPVPLVLVYKNQKISLNC.

The protein resides in the mitochondrion. This is an uncharacterized protein from Schizosaccharomyces pombe (strain 972 / ATCC 24843) (Fission yeast).